Reading from the N-terminus, the 105-residue chain is MKNKIKIRLKSFDHRSLDQATKEIVSAVKRTFANISGPIPLPRKIQRFTVNRSPHVHIKSREQYEIRTQKRLLVIDDPNPVVVDALSKVDLAAGVDVVIELESGE.

The protein belongs to the universal ribosomal protein uS10 family. Part of the 30S ribosomal subunit.

In terms of biological role, involved in the binding of tRNA to the ribosomes. In Rickettsia bellii (strain OSU 85-389), this protein is Small ribosomal subunit protein uS10.